The sequence spans 850 residues: Tripartite terminase subunit 1 (850 aa).

Residues 191-219 (CAQCYEELTIIPNQGRSLNKRLQGLLCNH) form a C3H1-type zinc finger. Residues 438-489 (GTTLMTASNSSNSSTHSQRNNGGGGRARGGGKKVVGGGVNGQDGDGSENGLR) form a disordered region. Low complexity predominate over residues 439–457 (TTLMTASNSSNSSTHSQRN). Positions 458-481 (NGGGGRARGGGKKVVGGGVNGQDG) are enriched in gly residues. 709–716 (YNETFGKQ) lines the ATP pocket. Positions 801 to 831 (WLPSPYPSSSTAGVSRRVRATRKRPRRASSL) are disordered. The segment covering 816–827 (RRVRATRKRPRR) has biased composition (basic residues). The Nuclear localization signal motif lies at 822 to 827 (RKRPRR).

This sequence belongs to the herpesviridae TRM1 protein family. Associates with TRM2 and TRM3 to form the tripartite terminase complex. Interacts with portal protein.

It is found in the host nucleus. Its function is as follows. Component of the molecular motor that translocates viral genomic DNA in empty capsid during DNA packaging. Forms a tripartite terminase complex together with TRM2 and TRM3 in the host cytoplasm. Once the complex reaches the host nucleus, it interacts with the capsid portal vertex. This portal forms a ring in which genomic DNA is translocated into the capsid. TRM1 carries an endonuclease activity that plays an important role for the cleavage of concatemeric viral DNA into unit length genomes. In Homo sapiens (Human), this protein is Tripartite terminase subunit 1.